The following is a 1269-amino-acid chain: Protein flightless-1 homolog (1269 aa).

Met-1 is modified (N-acetylmethionine). The segment at 1 to 427 (MEATGVLPFV…SGPKDPMARK (427 aa)) is interaction with LRRFIP1 and LRRFIP2. LRR repeat units lie at residues 7-32 (LPFV…VKAM), 33-55 (TSLR…LAAL), 56-78 (QKLE…LSSL), 80-103 (SLRA…IFKL), 104-126 (DDLS…LENA), 127-149 (KNML…LFIN), 150-173 (LTDL…MRRL), 175-196 (HLQT…QLPA), 197-222 (MTAL…LEGL), 223-245 (SNLA…LYTL), 247-268 (SLRR…IDQW), 269-291 (VHVE…ICKL), 293-316 (KLKK…IGKL), 318-339 (NLEE…LCRC), 340-363 (PKLR…HFLT), and 365-385 (IEVL…PADR). Lys-21 bears the N6-acetyllysine mark. Phosphoserine is present on Ser-406. Ser-436 is modified (phosphoserine; by SGK3). A disordered region spans residues 452 to 473 (VAQEKNKKQEESADARAPSGKV). Residues 453–465 (AQEKNKKQEESAD) show a composition bias toward basic and acidic residues. Residues 495–827 (VGQLPGLTIW…TVSRSLEGTE (333 aa)) are interaction with ACTL6A. Gelsolin-like repeat units follow at residues 509–591 (FVPV…EEFL), 629–703 (NIKL…PEFW), and 758–831 (ELMP…AQVF). Thr-818 is subject to Phosphothreonine; by SGK3. Residues Ser-856 and Ser-860 each carry the phosphoserine modification. The segment at 951-975 (KKEDKEEKAEGKEGEEATAEAEEKQ) is disordered. Residues 952–965 (KEDKEEKAEGKEGE) are compositionally biased toward basic and acidic residues. The segment covering 966–975 (EATAEAEEKQ) has biased composition (acidic residues). Gelsolin-like repeat units follow at residues 1075 to 1143 (TDSS…PENF) and 1181 to 1254 (KCSD…QHAF).

As to quaternary structure, interacts with actin, ACTL6A, NCOA2 and CARM1. Interacts with LRRFIP1, LRRFIP2 and MYD88. Upon LPS stimulation, LRRFIP2 competes for MYD88-binding. LRRFIP1 constitutively blocks the interaction with MyD88, even in the absence of LPS. Interacts with the nuclear receptors ESR1 and THRB. Interacts with SGK3. Interacts (via the gelsolin-like region) with TMOD1. Interacts with (via the gelsolin-like region) TMOD3. Interacts with LMOD2, VCL, GSN and DES. As to expression, strongest expression in skeletal muscle with high expression also in the heart and lung.

It is found in the nucleus. The protein localises to the cytoplasm. The protein resides in the cytoskeleton. It localises to the microtubule organizing center. Its subcellular location is the centrosome. It is found in the cell projection. The protein localises to the podosome. The protein resides in the cell junction. It localises to the focal adhesion. Its function is as follows. Is a regulator of actin polymerization, required for proper myofibril organization and regulation of the length of sarcomeric thin filaments. It also plays a role in the assembly of cardiomyocyte cell adhesion complexes. Regulates cytoskeletal rearrangements involved in cytokinesis and cell migration, by inhibiting Rac1-dependent paxillin phosphorylation. May play a role as coactivator in transcriptional activation by hormone-activated nuclear receptors (NR) and acts in cooperation with NCOA2 and CARM1. Involved in estrogen hormone signaling. This chain is Protein flightless-1 homolog (FLII), found in Homo sapiens (Human).